We begin with the raw amino-acid sequence, 560 residues long: MTTSWSDRLQNAADVPANMDKHALKKYRREAYHRVFVNRSLAMEKIKCFGFDMDYTLAVYKSPEYESLGFELTVERLVSIGYPQELLSFAYDSTFPTRGLVFDTLYGNLLKVDAYGNLLVCAHGFNFIRGPETREQYPNKFIQRDDTERFYILNTLFNLPETYLLACLVDFFTNCPRYTSCDTGFKDGDLFMSYRSMFQDVRDAVDWVHYKGSLKEKTVENLEKYVVKDGKLPLLLSRMKEVGKVFLATNSDYKYTDKIMTYLFDFPHGPKPGSSHRPWQSYFDLILVDARKPLFFGEGTVLRQVDTKTGKLKIGTYTGPLQHGIVYSGGSSDTICDLLGAKGKDILYIGDHIFGDILKSKKRQGWRTFLVIPELAQELHVWTDKSSLFEELQSLDIFLAELYKHLDSSSNERPDISSIQRRIKKVTHDMDMCYGMMGSLFRSGSRQTLFASQVMRYADLYAASFINLLYYPFSYLFRAAHVLMPHESTVEHTHVDINEMESPLATRNRTSVDFKDTDYKRHQLTRSISEIKPPNLFPLAPQEITHCHDEDDDEEEEEEE.

Aspartate 52 functions as the Nucleophile in the catalytic mechanism. IMP contacts are provided by aspartate 52 and aspartate 54. Aspartate 52 and aspartate 54 together coordinate Mg(2+). Residue aspartate 54 is the Proton donor of the active site. Arginine 144 and asparagine 154 together coordinate ATP. Residues arginine 202, aspartate 206, lysine 215, threonine 249, asparagine 250, serine 251, and lysine 292 each contribute to the IMP site. Aspartate 351 contacts Mg(2+). Serine 418 is modified (phosphoserine). ATP contacts are provided by glutamine 453 and arginine 456. Phosphoserine is present on residues serine 502, serine 511, and serine 527. The segment at 541–560 (PQEITHCHDEDDDEEEEEEE) is disordered. The segment at 548 to 560 (HDEDDDEEEEEEE) is required for tetramer assembly. The segment covering 550 to 560 (EDDDEEEEEEE) has biased composition (acidic residues).

This sequence belongs to the 5'(3')-deoxyribonucleotidase family. In terms of assembly, homotetramer. Mg(2+) is required as a cofactor.

It is found in the cytoplasm. Its subcellular location is the cytosol. It catalyses the reaction a ribonucleoside 5'-phosphate + H2O = a ribonucleoside + phosphate. The catalysed reaction is a 2'-deoxyribonucleoside + a ribonucleoside 5'-phosphate = a ribonucleoside + a 2'-deoxyribonucleoside 5'-phosphate. It carries out the reaction IMP + H2O = inosine + phosphate. The enzyme catalyses GMP + H2O = guanosine + phosphate. It catalyses the reaction dGMP + H2O = 2'-deoxyguanosine + phosphate. The catalysed reaction is dIMP + H2O = 2'-deoxyinosine + phosphate. It carries out the reaction XMP + H2O = xanthosine + phosphate. The enzyme catalyses inosine + GMP = guanosine + IMP. It catalyses the reaction dGMP + inosine = 2'-deoxyguanosine + IMP. The catalysed reaction is dIMP + inosine = 2'-deoxyinosine + IMP. It carries out the reaction inosine + UMP = uridine + IMP. The enzyme catalyses inosine + CMP = cytidine + IMP. It catalyses the reaction inosine + AMP = IMP + adenosine. Its activity is regulated as follows. Allosterically activated by various compounds including ATP, 2,3-BPG/2,3-Bisphosphoglyceric acid and Ap4A/P1,P4-bis(5'-adenosyl) tetraphosphate. Binding of an allosteric activator is a prerequisiste to magnesium and substrate binding. Inhibited by inorganic phosphate. Functionally, broad specificity cytosolic 5'-nucleotidase that catalyzes the dephosphorylation of 6-hydroxypurine nucleoside 5'-monophosphates. In addition, possesses a phosphotransferase activity by which it can transfer a phosphate from a donor nucleoside monophosphate to an acceptor nucleoside, preferably inosine, deoxyinosine and guanosine. Has the highest activities for IMP and GMP followed by dIMP, dGMP and XMP. Could also catalyze the transfer of phosphates from pyrimidine monophosphates but with lower efficiency. Through these activities regulates the purine nucleoside/nucleotide pools within the cell. This Mus musculus (Mouse) protein is Cytosolic purine 5'-nucleotidase.